Reading from the N-terminus, the 430-residue chain is Probable WRKY transcription factor 14 (430 aa).

Residues 211–277 constitute a DNA-binding region (WRKY); that stretch reads SGEVVPSDLW…YTSEHNHPWP (67 aa). The disordered stretch occupies residues 283-366; sequence LAGSTRSSTS…APYRPELHDH (84 aa). The span at 286–306 shows a compositional bias: low complexity; it reads STRSSTSSSSNPNPSKPSTAN. A compositionally biased stretch (polar residues) spans 307 to 319; sequence VNSSSIGSQNTIY. The span at 340–354 shows a compositional bias: acidic residues; the sequence is GDDMELENVDDDDDN.

The protein belongs to the WRKY group II-e family.

Its subcellular location is the nucleus. In terms of biological role, transcription factor. Interacts specifically with the W box (5'-(T)TGAC[CT]-3'), a frequently occurring elicitor-responsive cis-acting element. The polypeptide is Probable WRKY transcription factor 14 (WRKY14) (Arabidopsis thaliana (Mouse-ear cress)).